Here is a 179-residue protein sequence, read N- to C-terminus: Insulin-like growth factor 2 (179 aa).

An N-terminal signal peptide occupies residues 1–24; that stretch reads MGITAGKSVLVLLAFLAFASCCYA. The tract at residues 25–52 is b; that stretch reads AYRPSETLCGGELVDTLQFVCGDRGFYF. 3 disulfide bridges follow: Cys-33/Cys-71, Cys-45/Cys-84, and Cys-70/Cys-75. The tract at residues 53 to 64 is c; it reads SRPSSRINRRSR. The a stretch occupies residues 65-85; sequence GIVEECCFRSCDLALLETYCA. A d region spans residues 86-91; that stretch reads TPAKSE. The propeptide at 92 to 179 is e peptide; that stretch reads RDVSASTTVL…GGASSKASSD (88 aa). Thr-106 carries O-linked (GalNAc...) threonine glycosylation. O-linked (GalNAc...) serine glycosylation is present at Ser-154. The tract at residues 160–179 is disordered; sequence ALPTQDPATHGGASSKASSD. Thr-163 carries O-linked (GalNAc...) threonine glycosylation.

This sequence belongs to the insulin family. Interacts with MYORG; this interaction is required for IGF2 secretion. Interacts with integrins ITGAV:ITGB3 and ITGA6:ITGB4; integrin-binding is required for IGF2 signaling. Interacts with IGFBP2. Proteolytically processed by PCSK4, proIGF2 is cleaved at Arg-128 and Arg-92 to generate big-IGF2 and mature IGF2.

Its subcellular location is the secreted. Functionally, the insulin-like growth factors possess growth-promoting activity. Major fetal growth hormone in mammals. Plays a key role in regulating fetoplacental development. IGF2 is influenced by placental lactogen. Also involved in tissue differentiation. In adults, involved in glucose metabolism in adipose tissue, skeletal muscle and liver. Acts as a ligand for integrin which is required for IGF2 signaling. Positively regulates myogenic transcription factor MYOD1 function by facilitating the recruitment of transcriptional coactivators, thereby controlling muscle terminal differentiation. Inhibits myoblast differentiation and modulates metabolism via increasing the mitochondrial respiration rate. In terms of biological role, preptin undergoes glucose-mediated co-secretion with insulin, and acts as a physiological amplifier of glucose-mediated insulin secretion. Exhibits osteogenic properties by increasing osteoblast mitogenic activity through phosphoactivation of MAPK1 and MAPK3. The protein is Insulin-like growth factor 2 of Bos taurus (Bovine).